Here is a 220-residue protein sequence, read N- to C-terminus: 7-cyano-7-deazaguanine synthase (220 aa).

10-20 (FSGGQDSTTCL) is a binding site for ATP. Positions 186, 195, 198, and 201 each coordinate Zn(2+).

Belongs to the QueC family. As to quaternary structure, homodimer. Zn(2+) serves as cofactor.

The enzyme catalyses 7-carboxy-7-deazaguanine + NH4(+) + ATP = 7-cyano-7-deazaguanine + ADP + phosphate + H2O + H(+). The protein operates within purine metabolism; 7-cyano-7-deazaguanine biosynthesis. Its function is as follows. Catalyzes the ATP-dependent conversion of 7-carboxy-7-deazaguanine (CDG) to 7-cyano-7-deazaguanine (preQ(0)). In Bacillus anthracis (strain A0248), this protein is 7-cyano-7-deazaguanine synthase.